The chain runs to 141 residues: Ribonuclease VapC2 (141 aa).

One can recognise a PINc domain in the interval 7-129 (LIDKSALVRL…FDAIAALTGQ (123 aa)). Residues Asp99, Asp117, and Asp119 each coordinate Mg(2+).

It belongs to the PINc/VapC protein family. As to quaternary structure, probably active as a homodimer. It depends on Mg(2+) as a cofactor.

Its function is as follows. Toxic component of a type II toxin-antitoxin (TA) system. Acts as an RNase. All its toxic effects are neutralized by coexpression with cognate antitoxin VapB2. The polypeptide is Ribonuclease VapC2 (Mycobacterium tuberculosis (strain CDC 1551 / Oshkosh)).